Consider the following 73-residue polypeptide: Cell division protein ZapB (73 aa).

The stretch at Leu3–Gly67 forms a coiled coil.

The protein belongs to the ZapB family. Homodimer. The ends of the coiled-coil dimer bind to each other, forming polymers. Interacts with FtsZ.

Its subcellular location is the cytoplasm. Its function is as follows. Non-essential, abundant cell division factor that is required for proper Z-ring formation. It is recruited early to the divisome by direct interaction with FtsZ, stimulating Z-ring assembly and thereby promoting cell division earlier in the cell cycle. Its recruitment to the Z-ring requires functional FtsA or ZipA. The polypeptide is Cell division protein ZapB (Shewanella sp. (strain MR-4)).